Consider the following 195-residue polypeptide: U8 snoRNA-decapping enzyme (195 aa).

Residues 18 to 168 enclose the Nudix hydrolase domain; it reads GWRHACHALL…LENTFIGNAR (151 aa). Residues histidine 24, arginine 50, and phenylalanine 57 each coordinate substrate. Residues glycine 59, glutamate 76, glutamate 80, and histidine 99 each contribute to the Mn(2+) site. The Nudix box signature appears at 61-82; it reads FVDLRDGSLEDGLNRELGEELG. Residues asparagine 166 and glutamine 170 each contribute to the substrate site. Glutamate 173 contacts Mn(2+).

This sequence belongs to the Nudix hydrolase family. NUDT16 subfamily. In terms of assembly, homodimer. Requires Mg(2+) as cofactor. Mn(2+) serves as cofactor. The cofactor is Co(2+).

The protein resides in the nucleus. It is found in the nucleolus. The protein localises to the nucleoplasm. Its subcellular location is the cytoplasm. The catalysed reaction is a 5'-end (N(7)-methyl 5'-triphosphoguanosine)-ribonucleoside in mRNA + H2O = N(7)-methyl-GDP + a 5'-end phospho-ribonucleoside in mRNA + 2 H(+). It catalyses the reaction IDP + H2O = IMP + phosphate + H(+). The enzyme catalyses dIDP + H2O = dIMP + phosphate + H(+). It carries out the reaction a 5'-end NAD(+)-phospho-ribonucleoside in mRNA + H2O = a 5'-end phospho-ribonucleoside in mRNA + NAD(+) + H(+). The catalysed reaction is a 5'-end FAD-phospho-ribonucleoside in mRNA + H2O = a 5'-end phospho-adenosine-phospho-ribonucleoside in mRNA + FMN + 2 H(+). It catalyses the reaction a 5'-end CoA-ribonucleoside in mRNA + H2O = a 5'-end phospho-adenosine-phospho-ribonucleoside in mRNA + (R)-4'-phosphopantetheine + 2 H(+). RNA-binding and decapping enzyme that catalyzes the cleavage of the cap structure of snoRNAs and mRNAs in a metal-dependent manner. Part of the U8 snoRNP complex that is required for the accumulation of mature 5.8S and 28S rRNA. Has diphosphatase activity and removes m7G and/or m227G caps from U8 snoRNA and leaves a 5'monophosphate on the RNA. Also catalyzes the cleavage of the cap structure on mRNAs. Does not hydrolyze cap analog structures like 7-methylguanosine nucleoside triphosphate (m7GpppG). Also hydrolysis m7G- and m227G U3-capped RNAs but with less efficiencies. Has broad substrate specificity with manganese or cobalt as cofactor and can act on various RNA species. Binds to the U8 snoRNA; metal is not required for RNA-binding. May play a role in the regulation of snoRNAs and mRNAs degradation. Also acts as a phosphatase; hydrolyzes the non-canonical purine nucleotides inosine diphosphate (IDP) and deoxyinosine diphosphate (dITP) as well as guanosine diphosphate (GDP), deoxyguanosine diphosphate (dGDP), xanthine diphosphate (XDP), inosine triphosphate (ITP) and deoxyinosine triphosphate (ITP) to their respective monophosphate derivatives and does not distinguish between the deoxy- and ribose forms. The order of activity with different substrates is IDP &gt; dIDP &gt;&gt; GDP = dGDP &gt; XDP = ITP = dITP. Binds strongly to GTP, ITP and XTP. Participates in the hydrolysis of dIDP/IDP and probably excludes non-canonical purines from RNA and DNA precursor pools, thus preventing their incorporation into RNA and DNA and avoiding chromosomal lesions. Exhibits decapping activity towards NAD-capped RNAs and FAD-capped RNAs. Exhibits decapping activity towards dpCoA-capped RNAs in vitro. This chain is U8 snoRNA-decapping enzyme (NUDT16), found in Bos taurus (Bovine).